The following is a 51-amino-acid chain: Large ribosomal subunit protein bL33 (51 aa).

Belongs to the bacterial ribosomal protein bL33 family.

The protein is Large ribosomal subunit protein bL33 of Methylococcus capsulatus (strain ATCC 33009 / NCIMB 11132 / Bath).